Reading from the N-terminus, the 120-residue chain is ATP-dependent Clp protease adapter protein ClpS (120 aa).

The interval methionine 1–aspartate 20 is disordered.

It belongs to the ClpS family. As to quaternary structure, binds to the N-terminal domain of the chaperone ClpA.

Involved in the modulation of the specificity of the ClpAP-mediated ATP-dependent protein degradation. The protein is ATP-dependent Clp protease adapter protein ClpS of Albidiferax ferrireducens (strain ATCC BAA-621 / DSM 15236 / T118) (Rhodoferax ferrireducens).